Reading from the N-terminus, the 149-residue chain is Cytochrome c-type biogenesis protein CcmE (149 aa).

Residues 1–7 are Cytoplasmic-facing; that stretch reads MTRKQKR. Residues 8 to 28 traverse the membrane as a helical; Signal-anchor for type II membrane protein segment; sequence LAVIAGGVGFIMVAVLLVLFA. The Periplasmic portion of the chain corresponds to 29-149; the sequence is FGQSIAYFYM…GVWKGEGEAK (121 aa). Heme is bound by residues His-123 and Tyr-127.

The protein belongs to the CcmE/CycJ family.

Its subcellular location is the cell inner membrane. Its function is as follows. Heme chaperone required for the biogenesis of c-type cytochromes. Transiently binds heme delivered by CcmC and transfers the heme to apo-cytochromes in a process facilitated by CcmF and CcmH. The sequence is that of Cytochrome c-type biogenesis protein CcmE from Allorhizobium ampelinum (strain ATCC BAA-846 / DSM 112012 / S4) (Agrobacterium vitis (strain S4)).